A 156-amino-acid chain; its full sequence is Ribosomal RNA large subunit methyltransferase H (156 aa).

S-adenosyl-L-methionine contacts are provided by residues Leu-73, Gly-104, and 123–128 (IGPLTL).

It belongs to the RNA methyltransferase RlmH family. As to quaternary structure, homodimer.

It localises to the cytoplasm. It carries out the reaction pseudouridine(1915) in 23S rRNA + S-adenosyl-L-methionine = N(3)-methylpseudouridine(1915) in 23S rRNA + S-adenosyl-L-homocysteine + H(+). Functionally, specifically methylates the pseudouridine at position 1915 (m3Psi1915) in 23S rRNA. The polypeptide is Ribosomal RNA large subunit methyltransferase H (Xanthomonas oryzae pv. oryzae (strain MAFF 311018)).